A 640-amino-acid polypeptide reads, in one-letter code: tRNA uridine 5-carboxymethylaminomethyl modification enzyme MnmG (640 aa).

Residue G9–G14 participates in FAD binding. G289–F303 serves as a coordination point for NAD(+).

The protein belongs to the MnmG family. Homodimer. Heterotetramer of two MnmE and two MnmG subunits. FAD serves as cofactor.

It localises to the cytoplasm. NAD-binding protein involved in the addition of a carboxymethylaminomethyl (cmnm) group at the wobble position (U34) of certain tRNAs, forming tRNA-cmnm(5)s(2)U34. The sequence is that of tRNA uridine 5-carboxymethylaminomethyl modification enzyme MnmG from Campylobacter hominis (strain ATCC BAA-381 / DSM 21671 / CCUG 45161 / LMG 19568 / NCTC 13146 / CH001A).